The sequence spans 240 residues: Methylthioribulose-1-phosphate dehydratase (240 aa).

Residue Cys-99 participates in substrate binding. Residues His-116 and His-118 each contribute to the Zn(2+) site. Glu-145 acts as the Proton donor/acceptor in catalysis. His-201 lines the Zn(2+) pocket.

It belongs to the aldolase class II family. MtnB subfamily. Requires Zn(2+) as cofactor.

The protein resides in the cytoplasm. It carries out the reaction 5-(methylsulfanyl)-D-ribulose 1-phosphate = 5-methylsulfanyl-2,3-dioxopentyl phosphate + H2O. It participates in amino-acid biosynthesis; L-methionine biosynthesis via salvage pathway; L-methionine from S-methyl-5-thio-alpha-D-ribose 1-phosphate: step 2/6. Catalyzes the dehydration of methylthioribulose-1-phosphate (MTRu-1-P) into 2,3-diketo-5-methylthiopentyl-1-phosphate (DK-MTP-1-P). The protein is Methylthioribulose-1-phosphate dehydratase of Ajellomyces capsulatus (strain H143) (Darling's disease fungus).